The sequence spans 238 residues: Uridylate kinase (238 aa).

12 to 15 (KLSG) is an ATP binding site. Positions 20–25 (GEKGFG) are involved in allosteric activation by GTP. Position 54 (G54) interacts with UMP. The ATP site is built by G55 and R59. UMP contacts are provided by residues D72 and 133–140 (TGNPYFST). 2 residues coordinate ATP: Y166 and D169.

Belongs to the UMP kinase family. Homohexamer.

It is found in the cytoplasm. It carries out the reaction UMP + ATP = UDP + ADP. Its pathway is pyrimidine metabolism; CTP biosynthesis via de novo pathway; UDP from UMP (UMPK route): step 1/1. Allosterically activated by GTP. Inhibited by UTP. Functionally, catalyzes the reversible phosphorylation of UMP to UDP. This chain is Uridylate kinase, found in Clostridium botulinum (strain Hall / ATCC 3502 / NCTC 13319 / Type A).